A 262-amino-acid chain; its full sequence is PsbP domain-containing protein 6, chloroplastic (262 aa).

Cys-128 and Cys-132 are joined by a disulfide.

This sequence belongs to the PsbP family.

It is found in the plastid. The protein localises to the chloroplast thylakoid lumen. May be involved in the redox regulation of photosystem II. This is PsbP domain-containing protein 6, chloroplastic (PPD6) from Arabidopsis thaliana (Mouse-ear cress).